A 251-amino-acid chain; its full sequence is BRI3-binding protein (251 aa).

Transmembrane regions (helical) follow at residues 13-33, 125-145, 146-166, and 185-205; these read AGLL…PGAQ, ALLL…TLGF, TFSV…VVLF, and VLPL…GFYW. Positions 217–247 form a coiled coil; it reads NPSVEEKLEHLEKQVRLLNIRLNRVLESLDR. The residue at position 229 (Lys-229) is an N6-acetyllysine. A Phosphoserine modification is found at Ser-248.

In terms of assembly, interacts with LETMD1. Interacts with BRI3 (isoforms 1 and 2); the interaction with isoform 2 is weaker than with isoform 1. Interacts with BRI3; the interaction is weak. Interacts with TMEM238L. Most abundantly expressed in brain, liver and kidney. Overexpressed in leukemia and lymphoma cell lines, as well as in various carcinomas.

The protein resides in the mitochondrion outer membrane. Functionally, involved in tumorigenesis and may function by stabilizing p53/TP53. This Homo sapiens (Human) protein is BRI3-binding protein.